Reading from the N-terminus, the 234-residue chain is Peptidase E (234 aa).

Residues Ser-123, Asp-138, and His-160 each act as charge relay system in the active site.

The protein belongs to the peptidase S51 family.

It is found in the cytoplasm. The catalysed reaction is Dipeptidase E catalyzes the hydrolysis of dipeptides Asp-|-Xaa. It does not act on peptides with N-terminal Glu, Asn or Gln, nor does it cleave isoaspartyl peptides.. Hydrolyzes dipeptides containing N-terminal aspartate residues. May play a role in allowing the cell to use peptide aspartate to spare carbon otherwise required for the synthesis of the aspartate family of amino acids. This is Peptidase E from Actinobacillus pleuropneumoniae serotype 5b (strain L20).